The following is a 444-amino-acid chain: Phosphoribosylamine--glycine ligase (444 aa).

One can recognise an ATP-grasp domain in the interval 109 to 324 (RNLFKKYNIK…FLEVCEAIVN (216 aa)). Residue 140-202 (LTEKGIKAVV…EEKLEGVEFT (63 aa)) coordinates ATP. Mg(2+)-binding residues include glutamine 282, glutamate 294, and asparagine 296. Residues glutamine 282, glutamate 294, and asparagine 296 each contribute to the Mn(2+) site.

This sequence belongs to the GARS family. Mg(2+) is required as a cofactor. The cofactor is Mn(2+).

It catalyses the reaction 5-phospho-beta-D-ribosylamine + glycine + ATP = N(1)-(5-phospho-beta-D-ribosyl)glycinamide + ADP + phosphate + H(+). It participates in purine metabolism; IMP biosynthesis via de novo pathway; N(1)-(5-phospho-D-ribosyl)glycinamide from 5-phospho-alpha-D-ribose 1-diphosphate: step 2/2. The sequence is that of Phosphoribosylamine--glycine ligase from Methanocaldococcus jannaschii (strain ATCC 43067 / DSM 2661 / JAL-1 / JCM 10045 / NBRC 100440) (Methanococcus jannaschii).